Reading from the N-terminus, the 596-residue chain is Fumarate reductase (cytochrome) (596 aa).

Positions 1-25 (MKKMNLAVCIATLMGTAGLMGTAVA) are cleaved as a signal peptide. Heme c-binding residues include His33, Cys39, Cys42, His43, Cys61, Cys64, His65, His83, His86, Cys93, Cys96, His97, Ala99, His100, Cys107, Cys110, and His111. The tract at residues 143 to 596 (ALASAPHDTV…EEAAKYSKKN (454 aa)) is flavoprotein-like. Residues Ala162, Glu181, Asn189, Ala194, Gly195, Gly196, Gly303, and Asp369 each coordinate FAD. Gly195 contacts fumarate. Residue Gly195 participates in succinate binding. Tyr386 lines the heme c pocket. Succinate-binding residues include His390, Thr402, and Glu403. Fumarate-binding residues include Thr402 and Glu403. The Proton donor role is filled by Arg427. His529 lines the fumarate pocket. His529 contributes to the succinate binding site. 2 residues coordinate FAD: His530 and Glu559. Residues Arg569 and Gly572 each contribute to the fumarate site. Succinate is bound by residues Arg569 and Gly572. Positions 574 and 575 each coordinate FAD.

It in the C-terminal section; belongs to the FAD-dependent oxidoreductase 2 family. FRD/SDH subfamily. As to quaternary structure, monomer. Requires FAD as cofactor. Heme c serves as cofactor.

It localises to the periplasm. It catalyses the reaction 2 Fe(III)-[cytochrome c] + succinate = fumarate + 2 Fe(II)-[cytochrome c] + 2 H(+). Mesaconic acid is a competitive inhibitor of fumarate reduction. Functionally, flavocytochrome that catalyzes the reduction of fumarate to succinate. Is essential for fumarate respiration during anaerobic growth, acting as the terminal reductase. Receives electrons from the membrane-bound tetraheme c-type cytochrome CymA. Is essentially unidirectional, catalyzing only fumarate reduction. Cannot reduce nitrite, dimethylsulphoxide, trimethylamine-N-oxide (TMAO) or sulfite. In vitro, can use the artificial electron donor methyl viologen. This is Fumarate reductase (cytochrome) from Shewanella frigidimarina (strain NCIMB 400).